The following is a 1378-amino-acid chain: Disease resistance protein RRS1 (1378 aa).

The TIR domain occupies 5-146 (EKDEEFVCIS…EIVRDVYETH (142 aa)). The NB-ARC domain maps to 170–421 (IGIRCVGIWG…LLEGCGFFPH (252 aa)). 179–186 (GMPGIGKT) contributes to the ATP binding site. LRR repeat units lie at residues 498–522 (SEEIEGLFLDTSNLRFDLQPSAFKN), 535–553 (NPEVHPVINFPTGSLHSLP), 554–575 (NELRLLHWENYPLKSLPQNFDP), 577–598 (HLVEINMPYSQLQKLWGGTKNL), 621–646 (AENLEVIDLQGCTRLQNFPAAGRLLR), 665–688 (PPNIEKLHLQGTGILALPVSTVKP), 742–766 (LPNMANLDLNVLDLSGCSSLNSIQG), 768–793 (PRFLKQLYLGGTAIREVPQLPQSLEI), and 831–854 (PRNLKELYFAGTTLREVPQLPLSL). Positions 988 to 1005 (RNFHCWAPGKVVPKVRKD) match the Nuclear localization signal motif. The WRKY DNA-binding region spans 1204 to 1272 (IPAIDEGDLW…YLSEHNHPRP (69 aa)). The tract at residues 1300–1321 (RVFQNKDEPNQPHLPSSSTPPR) is disordered.

As to quaternary structure, interacts with PopP2, a R.solanacearum type III effector.

The protein localises to the nucleus. It is found in the cytoplasm. Functionally, transcription factor. Interacts specifically with the W box (5'-(T)TGAC[CT]-3'), a frequently occurring elicitor-responsive cis-acting element. Also acts as a disease resistance protein involved in resistance to fungal and bacterial pathogens, including R.solanacearum, P.syringae pv. tomato and C.higginsianum. RRS1 mediated resistance depends on salicylic acid and NDR1 (AC O48915). The sequence is that of Disease resistance protein RRS1 from Arabidopsis thaliana (Mouse-ear cress).